Here is a 130-residue protein sequence, read N- to C-terminus: Protein ApaG (130 aa).

The ApaG domain occupies 3–127 (RAVTRQIEVL…FSLDSPDIRR (125 aa)).

This is Protein ApaG from Afipia carboxidovorans (strain ATCC 49405 / DSM 1227 / KCTC 32145 / OM5) (Oligotropha carboxidovorans).